The following is a 188-amino-acid chain: Pro-FMRFamide-related neuropeptide VF (188 aa).

Residues 1–26 (MEIISLKRFILLTVATSSFLTSNTFC) form the signal peptide. A propeptide spanning residues 27–57 (TDEFMMPHFHSKEGDGKYSQLRGIPKGEKER) is cleaved from the precursor. F94 bears the Phenylalanine amide mark. A propeptide spanning residues 97–106 (TIDEKRSPAA) is cleaved from the precursor. Disordered stretches follow at residues 116–144 (SHFPSLPQRFGRTTARSPKTPADLPQKPL) and 163–188 (IQSPGGKRTRRGAFVETDDAERKPEK). F125 carries the post-translational modification Phenylalanine amide. Positions 128–188 (TTARSPKTPA…TDDAERKPEK (61 aa)) are excised as a propeptide.

It belongs to the FARP (FMRFamide related peptide) family.

The protein localises to the secreted. Its function is as follows. Efficiently inhibits forskolin-induced production of cAMP. Acts as a potent negative regulator of gonadotropin synthesis and secretion. Induces secretion of prolactin. Efficiently inhibits forskolin-induced production of cAMP. Blocks morphine-induced analgesia. The protein is Pro-FMRFamide-related neuropeptide VF (Npvf) of Mus musculus (Mouse).